The primary structure comprises 309 residues: Porphobilinogen deaminase (309 aa).

Residue Cys-242 is modified to S-(dipyrrolylmethanemethyl)cysteine.

This sequence belongs to the HMBS family. In terms of assembly, monomer. It depends on dipyrromethane as a cofactor.

The enzyme catalyses 4 porphobilinogen + H2O = hydroxymethylbilane + 4 NH4(+). Its pathway is porphyrin-containing compound metabolism; protoporphyrin-IX biosynthesis; coproporphyrinogen-III from 5-aminolevulinate: step 2/4. Functionally, tetrapolymerization of the monopyrrole PBG into the hydroxymethylbilane pre-uroporphyrinogen in several discrete steps. This chain is Porphobilinogen deaminase, found in Hamiltonella defensa subsp. Acyrthosiphon pisum (strain 5AT).